The primary structure comprises 525 residues: uncharacterized protein (525 aa).

The zn(2)-C6 fungal-type DNA-binding region spans 21–48 (CLICRSMRKKCDEVHPQCGRCLKAGKQC).

It is found in the cytoplasm. It localises to the nucleus. This is an uncharacterized protein from Schizosaccharomyces pombe (strain 972 / ATCC 24843) (Fission yeast).